The primary structure comprises 299 residues: 4-diphosphocytidyl-2-C-methyl-D-erythritol kinase (299 aa).

Residue K10 is part of the active site. 96–106 serves as a coordination point for ATP; it reads PVAGGMAGGSA. The active site involves D138.

It belongs to the GHMP kinase family. IspE subfamily.

The catalysed reaction is 4-CDP-2-C-methyl-D-erythritol + ATP = 4-CDP-2-C-methyl-D-erythritol 2-phosphate + ADP + H(+). The protein operates within isoprenoid biosynthesis; isopentenyl diphosphate biosynthesis via DXP pathway; isopentenyl diphosphate from 1-deoxy-D-xylulose 5-phosphate: step 3/6. Functionally, catalyzes the phosphorylation of the position 2 hydroxy group of 4-diphosphocytidyl-2C-methyl-D-erythritol. This Streptomyces coelicolor (strain ATCC BAA-471 / A3(2) / M145) protein is 4-diphosphocytidyl-2-C-methyl-D-erythritol kinase.